The sequence spans 416 residues: S-adenosylmethionine synthase (416 aa).

H16 provides a ligand contact to ATP. A Mg(2+)-binding site is contributed by D18. Residue E44 coordinates K(+). L-methionine is bound by residues E57 and Q100. Residues 100–110 are flexible loop; that stretch reads QSPDIAQGVTQ. Residues 175–177, 251–252, D260, 266–267, A283, and K287 each bind ATP; these read DGK, KF, and RK. An L-methionine-binding site is contributed by D260. An L-methionine-binding site is contributed by K291.

It belongs to the AdoMet synthase family. Homotetramer; dimer of dimers. It depends on Mg(2+) as a cofactor. Requires K(+) as cofactor.

It localises to the cytoplasm. The enzyme catalyses L-methionine + ATP + H2O = S-adenosyl-L-methionine + phosphate + diphosphate. Its pathway is amino-acid biosynthesis; S-adenosyl-L-methionine biosynthesis; S-adenosyl-L-methionine from L-methionine: step 1/1. Its function is as follows. Catalyzes the formation of S-adenosylmethionine (AdoMet) from methionine and ATP. The overall synthetic reaction is composed of two sequential steps, AdoMet formation and the subsequent tripolyphosphate hydrolysis which occurs prior to release of AdoMet from the enzyme. The polypeptide is S-adenosylmethionine synthase (Crocosphaera subtropica (strain ATCC 51142 / BH68) (Cyanothece sp. (strain ATCC 51142))).